The chain runs to 332 residues: MHNTDVLIIGAGPVGLFAIFQAGMLGMKCHVIDAQEVIGGQCITLYPEKPIYDIPAYPKIAAADLIKQLELQAAPFNPVYHLNQQAVELKKEGEFFEVKTSKDIVIKSKVIVIAAGAGSFGPNKPPLANIEEFENESVFYFINNRSKFTGKNIVIAGGGDSAVDWAISLSEIANKIYLVHRRDKFRAANESLRQLKDIAESGKIELVTGYQLDSLEGNNSELQSVIVRDLQNNTRKLNVNILLPFFGLKQELGNLVNWDLDIKLHHIEVDPVYYQTNISGIYAIGDVAHYSGKLKLILTGFAEAASSLHHAYGKVFDGNALHFEYSTTKYTQ.

Asp33, Gln41, Tyr46, Ala86, Phe120, Asp286, and Thr327 together coordinate FAD.

The protein belongs to the ferredoxin--NADP reductase type 2 family. Homodimer. The cofactor is FAD.

It carries out the reaction 2 reduced [2Fe-2S]-[ferredoxin] + NADP(+) + H(+) = 2 oxidized [2Fe-2S]-[ferredoxin] + NADPH. The polypeptide is Ferredoxin--NADP reductase (Rickettsia bellii (strain OSU 85-389)).